A 414-amino-acid polypeptide reads, in one-letter code: Imidazolonepropionase (414 aa).

A compositionally biased stretch (polar residues) spans 1–20 (MSHQLFRNTRIYSPMDSGQP). Positions 1–26 (MSHQLFRNTRIYSPMDSGQPSAGKAQ) are disordered. Residues histidine 81 and histidine 83 each coordinate Fe(3+). The Zn(2+) site is built by histidine 81 and histidine 83. Arginine 90, tyrosine 153, and histidine 186 together coordinate 4-imidazolone-5-propanoate. Residue tyrosine 153 coordinates N-formimidoyl-L-glutamate. Histidine 251 contributes to the Fe(3+) binding site. Histidine 251 contributes to the Zn(2+) binding site. Residue glutamate 254 coordinates 4-imidazolone-5-propanoate. Aspartate 325 contacts Fe(3+). Residue aspartate 325 participates in Zn(2+) binding. N-formimidoyl-L-glutamate is bound by residues asparagine 327 and glycine 329. Serine 330 provides a ligand contact to 4-imidazolone-5-propanoate.

Belongs to the metallo-dependent hydrolases superfamily. HutI family. Zn(2+) is required as a cofactor. It depends on Fe(3+) as a cofactor.

Its subcellular location is the cytoplasm. It carries out the reaction 4-imidazolone-5-propanoate + H2O = N-formimidoyl-L-glutamate. The protein operates within amino-acid degradation; L-histidine degradation into L-glutamate; N-formimidoyl-L-glutamate from L-histidine: step 3/3. In terms of biological role, catalyzes the hydrolytic cleavage of the carbon-nitrogen bond in imidazolone-5-propanoate to yield N-formimidoyl-L-glutamate. It is the third step in the universal histidine degradation pathway. This chain is Imidazolonepropionase, found in Desulfotalea psychrophila (strain LSv54 / DSM 12343).